Consider the following 711-residue polypeptide: Ferric reductase transmembrane component 3 (711 aa).

Positions 1–20 (MYWVLLCGSILLCCLSGASA) are cleaved as a signal peptide. Residues 21 to 166 (SPAKTKMYGK…YANYDIGHTY (146 aa)) lie on the Extracellular side of the membrane. Asparagine 85, asparagine 108, asparagine 120, and asparagine 134 each carry an N-linked (GlcNAc...) asparagine glycan. A helical transmembrane segment spans residues 167 to 187 (GGIICAYFVGVMILASILHYL). Topologically, residues 188-237 (SYTPFKTALFKQRLVRYVRRYLTIPTIWGKHASSFSYLKIFTGFLPTRSE) are cytoplasmic. A helical transmembrane segment spans residues 238–258 (GVIILGYLVLHTVFLAYGYQY). Topologically, residues 259–280 (DPYNLIFDSRREQIARYVADRS) are extracellular. The Ferric oxidoreductase domain occupies 280–414 (SGVLAFAHFP…SGIEWIYAAI (135 aa)). A helical membrane pass occupies residues 281 to 301 (GVLAFAHFPLIALFAGRNNFL). Residues 302-321 (EFISGVKYTSFIMFHKWLGR) lie on the Cytoplasmic side of the membrane. 2 residues coordinate heme: histidine 316 and histidine 330. The helical transmembrane segment at 322–341 (MMFLDAVIHGAAYTSYSVFY) threads the bilayer. Over 342–353 (KDWAASKEETYW) the chain is Extracellular. A helical transmembrane segment spans residues 354–374 (QFGVAALCIVGVMVFFSLAMF). Residues 375-376 (RK) lie on the Cytoplasmic side of the membrane. The helical transmembrane segment at 377–397 (FFYEAFLFLHIVLGALFFYTC) threads the bilayer. Histidine 386 contributes to the heme binding site. A topological domain (extracellular) is located at residue tryptophan 398. The chain crosses the membrane as a helical span at residues 399–419 (EHVVELSGIEWIYAAIAIWTI). Histidine 400 lines the heme pocket. Residues 415–534 (AIWTIDRLIR…EGPYGSSSPV (120 aa)) form the FAD-binding FR-type domain. Topologically, residues 420-711 (DRLIRIVRVS…IEYFEEYQSW (292 aa)) are cytoplasmic. 479–485 (HPFTVLD) lines the FAD pocket. NADP(+) is bound by residues 526–529 (GPYG) and 677–678 (CG).

This sequence belongs to the ferric reductase (FRE) family. Requires FAD as cofactor. It depends on heme as a cofactor.

The protein localises to the cell membrane. The catalysed reaction is 2 a Fe(II)-siderophore + NADP(+) + H(+) = 2 a Fe(III)-siderophore + NADPH. Siderophore-iron reductase responsible for reducing extracellular iron prior to import. Catalyzes the reductive uptake of Fe(3+) bound to di- and trihydroxamate siderophores. Fe(3+) is reduced to Fe(2+), which then dissociates from the siderophore and can be imported by the high-affinity Fe(2+) transport complex in the plasma membrane. The polypeptide is Ferric reductase transmembrane component 3 (FRE3) (Saccharomyces cerevisiae (strain ATCC 204508 / S288c) (Baker's yeast)).